Consider the following 442-residue polypeptide: D-serine dehydratase (442 aa).

K118 is modified (N6-(pyridoxal phosphate)lysine).

This sequence belongs to the serine/threonine dehydratase family. DsdA subfamily. In terms of assembly, monomer. Requires pyridoxal 5'-phosphate as cofactor.

It catalyses the reaction D-serine = pyruvate + NH4(+). The chain is D-serine dehydratase from Escherichia coli O6:H1 (strain CFT073 / ATCC 700928 / UPEC).